Consider the following 111-residue polypeptide: Probable 4-amino-4-deoxy-L-arabinose-phosphoundecaprenol flippase subunit ArnE (111 aa).

Over 1-37 (MIWLTLVFASLLSVAGQLCQKQATCFVAINKRRKHIA) the chain is Cytoplasmic. A helical transmembrane segment spans residues 38–58 (LWLGLALACLGLAMVLWLLVL). The 70-residue stretch at 40–109 (LGLALACLGL…IIGGIVILGS (70 aa)) folds into the EamA domain. Over 59-60 (QN) the chain is Periplasmic. A helical membrane pass occupies residues 61-81 (VPVGIAYPMLSLNFVWVTLAA). The Cytoplasmic segment spans residues 82 to 87 (VKLWHE). A helical transmembrane segment spans residues 88–108 (PVSPRHWCGVAFIIGGIVILG). Over 109–111 (STV) the chain is Periplasmic.

This sequence belongs to the ArnE family. Heterodimer of ArnE and ArnF.

It is found in the cell inner membrane. It participates in bacterial outer membrane biogenesis; lipopolysaccharide biosynthesis. In terms of biological role, translocates 4-amino-4-deoxy-L-arabinose-phosphoundecaprenol (alpha-L-Ara4N-phosphoundecaprenol) from the cytoplasmic to the periplasmic side of the inner membrane. In Escherichia coli (strain 55989 / EAEC), this protein is Probable 4-amino-4-deoxy-L-arabinose-phosphoundecaprenol flippase subunit ArnE.